The primary structure comprises 291 residues: MKKFNDWLEKHNLRNIPTLIVVVAFVLFVFMTIAFLNHNDEDSSTIYITEDAELRTGPSAAYPEIHSIDKGQNFHKIGKTGKWIEVVSSNNKEKGWVAGWHTNLNIQADKNPNAKPLKDKTIVLDPGHGGSDQGASSNTHKKSKEKVYTLKTAKELKALLEKEGATVSMTRESDTYVTLDDRNIKGDAYISIHNDSLKSSKANGSTVYWFKDNQKALAETLSASLQKKALLTNKGARQENFQVLRQTNVPAVLLELGYISNPTDEDMITEKLHRHIVEQAIVEGLRAYFSE.

The first 40 residues, 1–40 (MKKFNDWLEKHNLRNIPTLIVVVAFVLFVFMTIAFLNHND), serve as a signal peptide directing secretion. The SH3b domain maps to 41 to 105 (EDSSTIYITE…WVAGWHTNLN (65 aa)). A disordered region spans residues 109–146 (DKNPNAKPLKDKTIVLDPGHGGSDQGASSNTHKKSKEK). The MurNAc-LAA domain maps to 122 to 286 (IVLDPGHGGS…VEQAIVEGLR (165 aa)).

It belongs to the N-acetylmuramoyl-L-alanine amidase 3 family.

It localises to the secreted. Its function is as follows. Probably involved in cell-wall metabolism. The sequence is that of Probable cell wall amidase LytH (lytH) from Staphylococcus saprophyticus subsp. saprophyticus (strain ATCC 15305 / DSM 20229 / NCIMB 8711 / NCTC 7292 / S-41).